A 520-amino-acid polypeptide reads, in one-letter code: Peptide chain release factor 3 (520 aa).

A tr-type G domain is found at 8–277; that stretch reads ESRKTFAIIS…FAPMPNARQT (270 aa). GTP-binding positions include 17-24, 85-89, and 139-142; these read SHPDAGKT, DTPGH, and NKLD.

It belongs to the TRAFAC class translation factor GTPase superfamily. Classic translation factor GTPase family. PrfC subfamily.

Its subcellular location is the cytoplasm. Functionally, increases the formation of ribosomal termination complexes and stimulates activities of RF-1 and RF-2. It binds guanine nucleotides and has strong preference for UGA stop codons. It may interact directly with the ribosome. The stimulation of RF-1 and RF-2 is significantly reduced by GTP and GDP, but not by GMP. This chain is Peptide chain release factor 3, found in Staphylococcus aureus (strain MRSA252).